We begin with the raw amino-acid sequence, 428 residues long: Adenylosuccinate synthetase (428 aa).

GTP-binding positions include 12–18 (GDEGKGK) and 40–42 (GHT). The Proton acceptor role is filled by D13. The Mg(2+) site is built by D13 and G40. Residues 13 to 16 (DEGK), 38 to 41 (NAGH), T128, R142, Q223, T238, and R302 each bind IMP. H41 (proton donor) is an active-site residue. Residue 298-304 (TTTGRPR) coordinates substrate. Residues R304, 330–332 (SID), and 412–414 (SVG) contribute to the GTP site.

The protein belongs to the adenylosuccinate synthetase family. Homodimer. Requires Mg(2+) as cofactor.

It localises to the cytoplasm. It carries out the reaction IMP + L-aspartate + GTP = N(6)-(1,2-dicarboxyethyl)-AMP + GDP + phosphate + 2 H(+). It functions in the pathway purine metabolism; AMP biosynthesis via de novo pathway; AMP from IMP: step 1/2. Its function is as follows. Plays an important role in the de novo pathway of purine nucleotide biosynthesis. Catalyzes the first committed step in the biosynthesis of AMP from IMP. This Geobacillus sp. (strain WCH70) protein is Adenylosuccinate synthetase.